A 300-amino-acid polypeptide reads, in one-letter code: 4-diphosphocytidyl-2-C-methyl-D-erythritol kinase (300 aa).

Lys12 is an active-site residue. Position 94–104 (94–104) interacts with ATP; that stretch reads PAQAGIGGGSS. Asp136 is a catalytic residue.

The protein belongs to the GHMP kinase family. IspE subfamily.

The enzyme catalyses 4-CDP-2-C-methyl-D-erythritol + ATP = 4-CDP-2-C-methyl-D-erythritol 2-phosphate + ADP + H(+). It functions in the pathway isoprenoid biosynthesis; isopentenyl diphosphate biosynthesis via DXP pathway; isopentenyl diphosphate from 1-deoxy-D-xylulose 5-phosphate: step 3/6. Catalyzes the phosphorylation of the position 2 hydroxy group of 4-diphosphocytidyl-2C-methyl-D-erythritol. The chain is 4-diphosphocytidyl-2-C-methyl-D-erythritol kinase from Verminephrobacter eiseniae (strain EF01-2).